The sequence spans 377 residues: Transcription initiation factor IIA subunit 1 (377 aa).

Alanine 2 carries the N-acetylalanine modification. Composition is skewed to low complexity over residues 69 to 79 (QVQQQHQPQQQ), 89 to 105 (QAQP…TQQV), and 248 to 280 (QAQI…TGDT). 2 disordered regions span residues 69–107 (QVQQ…QVLI) and 248–330 (QAQI…QELF). A phosphoserine; by TAF1 mark is found at serine 281 and serine 282. Residues 281–330 (SSEEDEDEEEDYDDDEEEDKEKDGAEDGQVEEEPLNSEDDVSDEEGQELF) are compositionally biased toward acidic residues. Residues serine 317 and serine 322 each carry the phosphoserine modification. DNA-binding residues include histidine 344 and arginine 345.

The protein belongs to the TFIIA subunit 1 family. In terms of assembly, TFIIA is a heterodimer of the large unprocessed subunit 1 and a small subunit gamma. It was originally believed to be a heterotrimer of an alpha (p35), a beta (p19) and a gamma subunit (p12). TFIIA forms a complex with TBP. Part of TBP-based Pol II pre-initiation complex (PIC), in which Pol II core assembles with general transcription factors and other specific initiation factors including GTF2E1, GTF2E2, GTF2F1, GTF2F2, TCEA1, ERCC2, ERCC3, GTF2H2, GTF2H3, GTF2H4, GTF2H5, GTF2A1, GTF2A2, GTF2B and TBP; this large multi-subunit PIC complex mediates DNA unwinding and targets Pol II core to the transcription start site where the first phosphodiester bond forms. Post-translationally, the alpha and beta subunits are postranslationally produced from the precursor formby TASP1. The cleavage promotes proteasomal degradation.

The protein localises to the nucleus. Its function is as follows. TFIIA is a component of the transcription machinery of RNA polymerase II and plays an important role in transcriptional activation. TFIIA in a complex with TBP mediates transcriptional activity. The sequence is that of Transcription initiation factor IIA subunit 1 (Gtf2a1) from Rattus norvegicus (Rat).